A 201-amino-acid polypeptide reads, in one-letter code: Dephospho-CoA kinase (201 aa).

The DPCK domain occupies 4-201; sequence SVGLTGNIAS…KYLREAKIKQ (198 aa). 12–17 lines the ATP pocket; sequence ASGKST.

Belongs to the CoaE family.

It is found in the cytoplasm. The catalysed reaction is 3'-dephospho-CoA + ATP = ADP + CoA + H(+). It participates in cofactor biosynthesis; coenzyme A biosynthesis; CoA from (R)-pantothenate: step 5/5. Its function is as follows. Catalyzes the phosphorylation of the 3'-hydroxyl group of dephosphocoenzyme A to form coenzyme A. The protein is Dephospho-CoA kinase of Legionella pneumophila (strain Paris).